The chain runs to 74 residues: ATP synthase F(1) complex subunit epsilon, mitochondrial (74 aa).

Belongs to the eukaryotic ATPase epsilon family. In terms of assembly, component of the ATP synthase complex composed at least of ATP5F1A/subunit alpha, ATP5F1B/subunit beta, ATP5MC1/subunit c (homooctomer), MT-ATP6/subunit a, MT-ATP8/subunit 8, ATP5ME/subunit e, ATP5MF/subunit f, ATP5MG/subunit g, ATP5MK/subunit k, ATP5MJ/subunit j, ATP5F1C/subunit gamma, ATP5F1D/subunit delta, ATP5F1E/subunit epsilon, ATP5PF/subunit F6, ATP5PB/subunit b, ATP5PD/subunit d, ATP5PO/subunit OSCP. ATP synthase complex consists of a soluble F(1) head domain (subunits alpha(3) and beta(3)) - the catalytic core - and a membrane F(0) domain - the membrane proton channel (subunits c, a, 8, e, f, g, k and j). These two domains are linked by a central stalk (subunits gamma, delta, and epsilon) rotating inside the F1 region and a stationary peripheral stalk (subunits F6, b, d, and OSCP).

Its subcellular location is the mitochondrion. The protein resides in the mitochondrion inner membrane. Functionally, subunit epsilon, of the mitochondrial membrane ATP synthase complex (F(1)F(0) ATP synthase or Complex V) that produces ATP from ADP in the presence of a proton gradient across the membrane which is generated by electron transport complexes of the respiratory chain. ATP synthase complex consist of a soluble F(1) head domain - the catalytic core - and a membrane F(1) domain - the membrane proton channel. These two domains are linked by a central stalk rotating inside the F(1) region and a stationary peripheral stalk. During catalysis, ATP synthesis in the catalytic domain of F(1) is coupled via a rotary mechanism of the central stalk subunits to proton translocation. In vivo, can only synthesize ATP although its ATP hydrolase activity can be activated artificially in vitro. May be essential for the assembly of F(1) and may play an important role in the incorporation of the hydrophobic subunit c into the F(1)-c oligomer rotor of the mitochondrial ATP synthase complex. This chain is ATP synthase F(1) complex subunit epsilon, mitochondrial, found in Dictyostelium discoideum (Social amoeba).